The sequence spans 202 residues: Urease accessory protein UreF (202 aa).

This sequence belongs to the UreF family. In terms of assembly, ureD, UreF and UreG form a complex that acts as a GTP-hydrolysis-dependent molecular chaperone, activating the urease apoprotein by helping to assemble the nickel containing metallocenter of UreC. The UreE protein probably delivers the nickel.

The protein localises to the cytoplasm. Its function is as follows. Required for maturation of urease via the functional incorporation of the urease nickel metallocenter. The sequence is that of Urease accessory protein UreF from Sporosarcina pasteurii (Bacillus pasteurii).